The sequence spans 364 residues: MLWPALRSVLFQLDPERVHHLAHWALHRVPLAVARARRPAPIPALAVRCMGLDFDGPVGLAAGFDKGDVALPGLFGLGFSHVEIGTITPRPQPGNDRPRLFRLPEHRALLNRMGFNNEGMEACARRLAALPPAARLGPVGINVGKNKVTPNEDAAADYLACIERLHPYADYLVVNISSPNTPGLRQLQERDALDRLLRACVRHLAERAPGKPLLVKLAPDLSPEALDEAVDVAIAAGAAGIVATNTTLSRAGVERHPRAAEAGGLSGAPLERLATDVVRRCYARAAGRVPIVGVGGVMDAEGAYAKIRAGATLVQAYTGLIYGGPGFVGRVNAGLARLLERDEFSTLSDAIGADHRQGGGKAAG.

FMN contacts are provided by residues 62–66 and T86; that span reads AGFDK. Residue K66 participates in substrate binding. 111 to 115 contacts substrate; that stretch reads NRMGF. Residues N142 and N175 each coordinate FMN. Position 175 (N175) interacts with substrate. S178 serves as the catalytic Nucleophile. N180 provides a ligand contact to substrate. The FMN site is built by K216 and T244. 245 to 246 serves as a coordination point for substrate; the sequence is NT. FMN-binding positions include G267, G296, and 317 to 318; that span reads YT.

The protein belongs to the dihydroorotate dehydrogenase family. Type 2 subfamily. Monomer. The cofactor is FMN.

It localises to the cell membrane. It carries out the reaction (S)-dihydroorotate + a quinone = orotate + a quinol. It participates in pyrimidine metabolism; UMP biosynthesis via de novo pathway; orotate from (S)-dihydroorotate (quinone route): step 1/1. Its function is as follows. Catalyzes the conversion of dihydroorotate to orotate with quinone as electron acceptor. The protein is Dihydroorotate dehydrogenase (quinone) of Anaeromyxobacter sp. (strain K).